Reading from the N-terminus, the 264-residue chain is Acyl-[acyl-carrier-protein]--UDP-N-acetylglucosamine O-acyltransferase (264 aa).

The protein belongs to the transferase hexapeptide repeat family. LpxA subfamily. As to quaternary structure, homotrimer.

The protein localises to the cytoplasm. It carries out the reaction a (3R)-hydroxyacyl-[ACP] + UDP-N-acetyl-alpha-D-glucosamine = a UDP-3-O-[(3R)-3-hydroxyacyl]-N-acetyl-alpha-D-glucosamine + holo-[ACP]. The protein operates within glycolipid biosynthesis; lipid IV(A) biosynthesis; lipid IV(A) from (3R)-3-hydroxytetradecanoyl-[acyl-carrier-protein] and UDP-N-acetyl-alpha-D-glucosamine: step 1/6. Functionally, involved in the biosynthesis of lipid A, a phosphorylated glycolipid that anchors the lipopolysaccharide to the outer membrane of the cell. The chain is Acyl-[acyl-carrier-protein]--UDP-N-acetylglucosamine O-acyltransferase from Rickettsia typhi (strain ATCC VR-144 / Wilmington).